The chain runs to 216 residues: Phosphoserine phosphatase (216 aa).

Aspartate 10 functions as the Nucleophile in the catalytic mechanism. Positions 10 and 12 each coordinate Mg(2+). The active-site Proton donor is the aspartate 12. Substrate-binding positions include glutamate 19, arginine 55, 98–99 (SG), and lysine 143. Aspartate 166 contributes to the Mg(2+) binding site. Asparagine 169 is a binding site for substrate.

The protein belongs to the HAD-like hydrolase superfamily. SerB family. It depends on Mg(2+) as a cofactor.

It catalyses the reaction O-phospho-L-serine + H2O = L-serine + phosphate. It carries out the reaction O-phospho-D-serine + H2O = D-serine + phosphate. It participates in amino-acid biosynthesis; L-serine biosynthesis; L-serine from 3-phospho-D-glycerate: step 3/3. The sequence is that of Phosphoserine phosphatase from Lactococcus lactis subsp. lactis (strain IL1403) (Streptococcus lactis).